A 156-amino-acid chain; its full sequence is Small ribosomal subunit protein uS7 (156 aa).

The protein belongs to the universal ribosomal protein uS7 family. As to quaternary structure, part of the 30S ribosomal subunit. Contacts proteins S9 and S11.

Its function is as follows. One of the primary rRNA binding proteins, it binds directly to 16S rRNA where it nucleates assembly of the head domain of the 30S subunit. Is located at the subunit interface close to the decoding center, probably blocks exit of the E-site tRNA. The protein is Small ribosomal subunit protein uS7 of Syntrophotalea carbinolica (strain DSM 2380 / NBRC 103641 / GraBd1) (Pelobacter carbinolicus).